Consider the following 260-residue polypeptide: MQKDYQKLIVYLCDFLEKEAQKRGFKKVVYGLSGGLDSAVVGVLCQKVFKENAHALLMPSSVSMPESKTDALNLCETFSIPYTEYSIAPYDKIFGSHFKDASLTRKGNFCARLRMAFLYDYSLKSDSLVIGTSNKSERILGYGTLFGDLACAINPIGELFKTEVYELAYYLNIPKKILNKPPSADLFVGQSDEKDLGYPYSVIDPLLKDIEALFQTKPIHLETLTQLGYDEILVKNIISRIQKNAFKLESPTIAKRFNPK.

31-38 (GLSGGLDS) is an ATP binding site. Aspartate 37 contributes to the Mg(2+) binding site. Position 112 (arginine 112) interacts with deamido-NAD(+). Residue threonine 132 coordinates ATP. Glutamate 137 contacts Mg(2+). Lysine 161 and serine 183 together coordinate ATP.

It belongs to the NAD synthetase family. In terms of assembly, homodimer.

It catalyses the reaction deamido-NAD(+) + NH4(+) + ATP = AMP + diphosphate + NAD(+) + H(+). It participates in cofactor biosynthesis; NAD(+) biosynthesis; NAD(+) from deamido-NAD(+) (ammonia route): step 1/1. Functionally, catalyzes the ATP-dependent amidation of deamido-NAD to form NAD. Uses ammonia as a nitrogen source. The sequence is that of NH(3)-dependent NAD(+) synthetase from Helicobacter pylori (strain G27).